The chain runs to 72 residues: Large ribosomal subunit protein bL28 (72 aa).

It belongs to the bacterial ribosomal protein bL28 family.

In Chlorobaculum tepidum (strain ATCC 49652 / DSM 12025 / NBRC 103806 / TLS) (Chlorobium tepidum), this protein is Large ribosomal subunit protein bL28.